Reading from the N-terminus, the 134-residue chain is Large-conductance mechanosensitive channel (134 aa).

2 helical membrane passes run 16 to 36 and 81 to 101; these read VIDL…VTAL and GDFL…FIIV.

Belongs to the MscL family. In terms of assembly, homopentamer.

It localises to the cell inner membrane. Its function is as follows. Channel that opens in response to stretch forces in the membrane lipid bilayer. May participate in the regulation of osmotic pressure changes within the cell. This chain is Large-conductance mechanosensitive channel, found in Xylella fastidiosa (strain 9a5c).